The sequence spans 312 residues: tRNA dimethylallyltransferase (312 aa).

15–22 (GPTAAGKS) provides a ligand contact to ATP. Position 17–22 (17–22 (TAAGKS)) interacts with substrate. Positions 40–43 (DSMQ) are interaction with substrate tRNA.

The protein belongs to the IPP transferase family. In terms of assembly, monomer. Mg(2+) is required as a cofactor.

The catalysed reaction is adenosine(37) in tRNA + dimethylallyl diphosphate = N(6)-dimethylallyladenosine(37) in tRNA + diphosphate. In terms of biological role, catalyzes the transfer of a dimethylallyl group onto the adenine at position 37 in tRNAs that read codons beginning with uridine, leading to the formation of N6-(dimethylallyl)adenosine (i(6)A). This is tRNA dimethylallyltransferase from Streptomyces coelicolor (strain ATCC BAA-471 / A3(2) / M145).